Consider the following 186-residue polypeptide: ATP synthase subunit delta (186 aa).

It belongs to the ATPase delta chain family. In terms of assembly, F-type ATPases have 2 components, F(1) - the catalytic core - and F(0) - the membrane proton channel. F(1) has five subunits: alpha(3), beta(3), gamma(1), delta(1), epsilon(1). F(0) has three main subunits: a(1), b(2) and c(10-14). The alpha and beta chains form an alternating ring which encloses part of the gamma chain. F(1) is attached to F(0) by a central stalk formed by the gamma and epsilon chains, while a peripheral stalk is formed by the delta and b chains.

It localises to the cell inner membrane. Functionally, f(1)F(0) ATP synthase produces ATP from ADP in the presence of a proton or sodium gradient. F-type ATPases consist of two structural domains, F(1) containing the extramembraneous catalytic core and F(0) containing the membrane proton channel, linked together by a central stalk and a peripheral stalk. During catalysis, ATP synthesis in the catalytic domain of F(1) is coupled via a rotary mechanism of the central stalk subunits to proton translocation. This protein is part of the stalk that links CF(0) to CF(1). It either transmits conformational changes from CF(0) to CF(1) or is implicated in proton conduction. The protein is ATP synthase subunit delta of Leptospira borgpetersenii serovar Hardjo-bovis (strain JB197).